Consider the following 718-residue polypeptide: Pullulanase (718 aa).

D406 (nucleophile) is an active-site residue. The active-site Proton donor is E435.

The protein belongs to the glycosyl hydrolase 13 family.

It carries out the reaction Hydrolysis of (1-&gt;6)-alpha-D-glucosidic linkages in pullulan, amylopectin and glycogen, and in the alpha- and beta-limit dextrins of amylopectin and glycogen.. The chain is Pullulanase (amyX) from Bacillus subtilis (strain 168).